The chain runs to 386 residues: Signal transduction histidine-protein kinase/phosphatase DegS (386 aa).

A Histidine kinase domain is found at 188 to 384; the sequence is KLSREIHDGP…TIIISIPITT (197 aa). His194 carries the post-translational modification Phosphohistidine; by autocatalysis.

Post-translationally, autophosphorylated.

Its subcellular location is the cytoplasm. The enzyme catalyses ATP + protein L-histidine = ADP + protein N-phospho-L-histidine.. Member of the two-component regulatory system DegS/DegU, which plays an important role in the transition growth phase. Acts as both a protein kinase that undergoes autophosphorylation and subsequently transfers the phosphate to DegU, and a protein phosphatase that dephosphorylates phospho-DegU. This chain is Signal transduction histidine-protein kinase/phosphatase DegS (degS), found in Brevibacillus brevis (Bacillus brevis).